We begin with the raw amino-acid sequence, 573 residues long: Globulin-1 S allele (573 aa).

The or 21 signal peptide spans 1–18 (MVSARIVVLLAVLLCAAA). Residues 19–86 (AVASSWEDDN…DRSGEGSSED (68 aa)) constitute a propeptide that is removed on maturation. The segment at 65–102 (EKRQERSRHEADDRSGEGSSEDEREREQEKEEKQKDRR) is disordered. 2 consecutive Cupin type-1 domains span residues 104–262 (YVFD…DRLE) and 311–493 (YSLL…EEVD). Positions 288 to 315 (RHASEGGHGPHWPLPPFGESRGPYSLLD) are disordered. N-linked (GlcNAc...) asparagine glycosylation occurs at Asn-349. Disordered stretches follow at residues 382–416 (PHRQ…EVGQ) and 498–573 (SRRE…TARM). Residues 390-402 (ESERERGKGRRSE) are compositionally biased toward basic and acidic residues. Over residues 403-413 (EEEESSEEQEE) the composition is skewed to acidic residues. Basic and acidic residues-rich tracts occupy residues 525–542 (EERH…REER) and 549–561 (REGR…REEV).

Belongs to the 7S seed storage protein family. In terms of processing, three protein-processing steps occur in the formation of the mature protein from the primary translation product.

The polypeptide is Globulin-1 S allele (GLB1) (Zea mays (Maize)).